We begin with the raw amino-acid sequence, 421 residues long: Synaptotagmin-12 (421 aa).

At 1–18 (MAVDVTEYHLSVIKSPPG) the chain is on the vesicular side. The chain crosses the membrane as a helical span at residues 19-39 (WEVGVYAAGALALLGIAAVSL). The Cytoplasmic segment spans residues 40–421 (WKLWTSGSFP…VSMWHPVRRN (382 aa)). A Phosphoserine; by PKA modification is found at Ser97. A phosphoserine mark is found at Ser99 and Ser214. 2 C2 domains span residues 152 to 272 (TLGQ…SGWL) and 283 to 416 (AVGE…SMWH).

It belongs to the synaptotagmin family. As to quaternary structure, homodimer. Can also form heterodimers. Interacts with SYT1. In terms of processing, phosphorylation of Ser-97 is required for mossy-fiber long-term potentiation. In terms of tissue distribution, expressed in the brain, specifically by neurons in the hippocampus, and in the adrenal medulla (at protein level).

The protein resides in the cytoplasmic vesicle. It localises to the secretory vesicle. Its subcellular location is the synaptic vesicle membrane. Its function is as follows. Synaptic vesicle phosphoprotein that enhances spontaneous neurotransmitter release but does not effect induced neurotransmitter release. Unlike other synaptotagmins, it does not bind Ca(2+) or phospholipids. Essential for mossy-fiber long-term potentiation in the hippocampus. This is Synaptotagmin-12 from Mus musculus (Mouse).